We begin with the raw amino-acid sequence, 382 residues long: Homoserine O-acetyltransferase (382 aa).

The region spanning 50 to 360 (NAVLICHALT…DKGHDAFLLD (311 aa)) is the AB hydrolase-1 domain. The active-site Nucleophile is Ser-155. Position 225 (Arg-225) interacts with substrate. Residues Asp-321 and His-354 contribute to the active site. Asp-355 provides a ligand contact to substrate.

The protein belongs to the AB hydrolase superfamily. MetX family. Homodimer.

The protein resides in the cytoplasm. The catalysed reaction is L-homoserine + acetyl-CoA = O-acetyl-L-homoserine + CoA. It functions in the pathway amino-acid biosynthesis; L-methionine biosynthesis via de novo pathway; O-acetyl-L-homoserine from L-homoserine: step 1/1. Transfers an acetyl group from acetyl-CoA to L-homoserine, forming acetyl-L-homoserine. The polypeptide is Homoserine O-acetyltransferase (Caulobacter vibrioides (strain ATCC 19089 / CIP 103742 / CB 15) (Caulobacter crescentus)).